A 437-amino-acid polypeptide reads, in one-letter code: Pyrophosphate--fructose 6-phosphate 1-phosphotransferase (437 aa).

Glycine 27 is a binding site for diphosphate. Aspartate 122 contacts Mg(2+). Substrate is bound by residues 147 to 149, 193 to 195, glutamate 261, and 323 to 326; these read TID, MGR, and YELR. Aspartate 149 serves as the catalytic Proton acceptor.

Belongs to the phosphofructokinase type A (PFKA) family. PPi-dependent PFK group II subfamily. Clade 'Short' sub-subfamily. As to quaternary structure, homotetramer. Requires Mg(2+) as cofactor. Mn(2+) is required as a cofactor.

The protein resides in the cytoplasm. The enzyme catalyses beta-D-fructose 6-phosphate + diphosphate = beta-D-fructose 1,6-bisphosphate + phosphate + H(+). It functions in the pathway carbohydrate degradation; glycolysis; D-glyceraldehyde 3-phosphate and glycerone phosphate from D-glucose: step 3/4. Activated by AMP. Probably promotes oligomerization of the enzyme. In terms of biological role, catalyzes the phosphorylation of D-fructose 6-phosphate, the first committing step of glycolysis. Uses inorganic phosphate (PPi) as phosphoryl donor instead of ATP like common ATP-dependent phosphofructokinases (ATP-PFKs), which renders the reaction reversible, and can thus function both in glycolysis and gluconeogenesis. Consistently, PPi-PFK can replace the enzymes of both the forward (ATP-PFK) and reverse (fructose-bisphosphatase (FBPase)) reactions. This is Pyrophosphate--fructose 6-phosphate 1-phosphotransferase from Naegleria fowleri (Brain eating amoeba).